Consider the following 127-residue polypeptide: MQDDPRYRVEVEVSPRFLAHQSTPDEGRYAFAYSIRIQNAGAVPARLVARHWQITDGNGRTEQVDGEGVVGEQPWLRPGEAFHYTSGVLLETEQGQMQGHYDMVADDGTEFIAPIAAFVLSVPRTLH.

Positions 3–127 (DDPRYRVEVE…FVLSVPRTLH (125 aa)) constitute an ApaG domain.

This Xanthomonas axonopodis pv. citri (strain 306) protein is Protein ApaG.